A 109-amino-acid chain; its full sequence is Cell division protein ZapA (109 aa).

Residues 21–99 (PEQRDALNQA…IEQALLEQGR (79 aa)) are a coiled coil.

It belongs to the ZapA family. Type 1 subfamily. As to quaternary structure, homodimer. Interacts with FtsZ.

It is found in the cytoplasm. Functionally, activator of cell division through the inhibition of FtsZ GTPase activity, therefore promoting FtsZ assembly into bundles of protofilaments necessary for the formation of the division Z ring. It is recruited early at mid-cell but it is not essential for cell division. The chain is Cell division protein ZapA from Cronobacter sakazakii (strain ATCC BAA-894) (Enterobacter sakazakii).